The primary structure comprises 493 residues: UDP-N-acetylmuramoyl-L-alanyl-D-glutamate--2,6-diaminopimelate ligase (493 aa).

Threonine 32 contributes to the UDP-N-acetyl-alpha-D-muramoyl-L-alanyl-D-glutamate binding site. An ATP-binding site is contributed by 110–116 (GTNGKTT). UDP-N-acetyl-alpha-D-muramoyl-L-alanyl-D-glutamate contacts are provided by residues asparagine 151, 152–153 (TT), serine 179, and arginine 187. Lysine 219 carries the post-translational modification N6-carboxylysine. Meso-2,6-diaminopimelate is bound by residues arginine 386, 410-413 (DNPR), glycine 460, and glutamate 464. The Meso-diaminopimelate recognition motif signature appears at 410–413 (DNPR).

The protein belongs to the MurCDEF family. MurE subfamily. Mg(2+) is required as a cofactor. In terms of processing, carboxylation is probably crucial for Mg(2+) binding and, consequently, for the gamma-phosphate positioning of ATP.

It is found in the cytoplasm. It catalyses the reaction UDP-N-acetyl-alpha-D-muramoyl-L-alanyl-D-glutamate + meso-2,6-diaminopimelate + ATP = UDP-N-acetyl-alpha-D-muramoyl-L-alanyl-gamma-D-glutamyl-meso-2,6-diaminopimelate + ADP + phosphate + H(+). Its pathway is cell wall biogenesis; peptidoglycan biosynthesis. In terms of biological role, catalyzes the addition of meso-diaminopimelic acid to the nucleotide precursor UDP-N-acetylmuramoyl-L-alanyl-D-glutamate (UMAG) in the biosynthesis of bacterial cell-wall peptidoglycan. The chain is UDP-N-acetylmuramoyl-L-alanyl-D-glutamate--2,6-diaminopimelate ligase from Lactiplantibacillus plantarum (strain ATCC BAA-793 / NCIMB 8826 / WCFS1) (Lactobacillus plantarum).